The primary structure comprises 313 residues: Porphobilinogen deaminase (313 aa).

Cys242 carries the S-(dipyrrolylmethanemethyl)cysteine modification.

The protein belongs to the HMBS family. Monomer. It depends on dipyrromethane as a cofactor.

The catalysed reaction is 4 porphobilinogen + H2O = hydroxymethylbilane + 4 NH4(+). The protein operates within porphyrin-containing compound metabolism; protoporphyrin-IX biosynthesis; coproporphyrinogen-III from 5-aminolevulinate: step 2/4. In terms of biological role, tetrapolymerization of the monopyrrole PBG into the hydroxymethylbilane pre-uroporphyrinogen in several discrete steps. The chain is Porphobilinogen deaminase from Yersinia pseudotuberculosis serotype O:3 (strain YPIII).